Reading from the N-terminus, the 193-residue chain is MIHHLKGQLIEKNPTYVVIECNGIGYYINISLHTFSLIPDSEAVSVYTHLQVKEDSHTLYGFAEKSEREIFRLLISVSGVGTSTARMMLSSLQPREVTEAIASEDVATIQSVKGIGAKTAQRVILDLKDKVLKVLGDDEVFVSQSNTNKEEALSALEILGYNRRQAGKVVEKILKEDPESTVESIIKMALKKL.

A domain I region spans residues 1–63 (MIHHLKGQLI…EDSHTLYGFA (63 aa)). Positions 64–142 (EKSEREIFRL…KVLGDDEVFV (79 aa)) are domain II. The tract at residues 143–145 (SQS) is flexible linker. Residues 145–193 (SNTNKEEALSALEILGYNRRQAGKVVEKILKEDPESTVESIIKMALKKL) are domain III.

Belongs to the RuvA family. In terms of assembly, homotetramer. Forms an RuvA(8)-RuvB(12)-Holliday junction (HJ) complex. HJ DNA is sandwiched between 2 RuvA tetramers; dsDNA enters through RuvA and exits via RuvB. An RuvB hexamer assembles on each DNA strand where it exits the tetramer. Each RuvB hexamer is contacted by two RuvA subunits (via domain III) on 2 adjacent RuvB subunits; this complex drives branch migration. In the full resolvosome a probable DNA-RuvA(4)-RuvB(12)-RuvC(2) complex forms which resolves the HJ.

It is found in the cytoplasm. In terms of biological role, the RuvA-RuvB-RuvC complex processes Holliday junction (HJ) DNA during genetic recombination and DNA repair, while the RuvA-RuvB complex plays an important role in the rescue of blocked DNA replication forks via replication fork reversal (RFR). RuvA specifically binds to HJ cruciform DNA, conferring on it an open structure. The RuvB hexamer acts as an ATP-dependent pump, pulling dsDNA into and through the RuvAB complex. HJ branch migration allows RuvC to scan DNA until it finds its consensus sequence, where it cleaves and resolves the cruciform DNA. This chain is Holliday junction branch migration complex subunit RuvA, found in Christiangramia forsetii (strain DSM 17595 / CGMCC 1.15422 / KT0803) (Gramella forsetii).